A 100-amino-acid polypeptide reads, in one-letter code: uncharacterized protein (100 aa).

The protein localises to the virion. This is an uncharacterized protein from Acanthamoeba polyphaga mimivirus (APMV).